The following is a 127-amino-acid chain: Large ribosomal subunit protein bL19 (127 aa).

It belongs to the bacterial ribosomal protein bL19 family.

This protein is located at the 30S-50S ribosomal subunit interface and may play a role in the structure and function of the aminoacyl-tRNA binding site. The protein is Large ribosomal subunit protein bL19 of Paraburkholderia phymatum (strain DSM 17167 / CIP 108236 / LMG 21445 / STM815) (Burkholderia phymatum).